The primary structure comprises 260 residues: MAVISMKQLLEAGVHFGHQTRRWNPKMAKYIFTERNGIHVIDLQQTVKYADQAYDFMRDAAANDAVILFVGTKKQAADAVKEEAERSGQYFINHRWLGGTLTNWSTIQKRVARLKEIKRMEEDGTFEVLPKKEVALLNKQRARLEKFLGGIEDMPRIPDVMYVVDPHKEQIAVKEAKKLGIPVVAMVDTNTDPDDIDVIIPANDDAIRAVKLITAKMADAVIEGRQGEDSVESVEAELAATETQADSIEEIVEVVEGSNE.

Belongs to the universal ribosomal protein uS2 family.

This Streptococcus sanguinis (strain SK36) protein is Small ribosomal subunit protein uS2.